A 120-amino-acid chain; its full sequence is FK506-binding protein 1B (120 aa).

Residues 1 to 24 (MNPPQGVTKTILRPGNGRDSPHTG) are disordered. A PPIase FKBP-type domain is found at 24-120 (GDTVIIDYTG…LVLYVCSPAG (97 aa)).

This sequence belongs to the FKBP-type PPIase family. FKBP1 subfamily.

It catalyses the reaction [protein]-peptidylproline (omega=180) = [protein]-peptidylproline (omega=0). PPIases accelerate the folding of proteins. It catalyzes the cis-trans isomerization of proline imidic peptide bonds in oligopeptides. This is FK506-binding protein 1B (FKBP3) from Emericella nidulans (strain FGSC A4 / ATCC 38163 / CBS 112.46 / NRRL 194 / M139) (Aspergillus nidulans).